A 128-amino-acid chain; its full sequence is B2 protein (128 aa).

Positions 1 to 10 (SLILLVAVQA) are cleaved as a signal peptide. 2 cysteine pairs are disulfide-bonded: Cys26–Cys57 and Cys97–Cys114.

It belongs to the PBP/GOBP family. N-glycosylated. In terms of tissue distribution, tubular accessory sex gland.

It localises to the secreted. Its function is as follows. May be a carrier protein for lipids. The chain is B2 protein from Tenebrio molitor (Yellow mealworm beetle).